A 117-amino-acid polypeptide reads, in one-letter code: Large ribosomal subunit protein uL18 (117 aa).

This sequence belongs to the universal ribosomal protein uL18 family. Part of the 50S ribosomal subunit; part of the 5S rRNA/L5/L18/L25 subcomplex. Contacts the 5S and 23S rRNAs.

This is one of the proteins that bind and probably mediate the attachment of the 5S RNA into the large ribosomal subunit, where it forms part of the central protuberance. In Histophilus somni (strain 129Pt) (Haemophilus somnus), this protein is Large ribosomal subunit protein uL18.